Consider the following 207-residue polypeptide: Putative 3-methyladenine DNA glycosylase (207 aa).

The protein belongs to the DNA glycosylase MPG family.

The polypeptide is Putative 3-methyladenine DNA glycosylase (Burkholderia lata (strain ATCC 17760 / DSM 23089 / LMG 22485 / NCIMB 9086 / R18194 / 383)).